The following is a 423-amino-acid chain: Acetylornithine aminotransferase, mitochondrial (423 aa).

Lys-276 is subject to N6-(pyridoxal phosphate)lysine.

This sequence belongs to the class-III pyridoxal-phosphate-dependent aminotransferase family. Pyridoxal 5'-phosphate is required as a cofactor.

The protein localises to the mitochondrion matrix. The catalysed reaction is N(2)-acetyl-L-ornithine + 2-oxoglutarate = N-acetyl-L-glutamate 5-semialdehyde + L-glutamate. Its pathway is amino-acid biosynthesis; L-arginine biosynthesis; N(2)-acetyl-L-ornithine from L-glutamate: step 4/4. The sequence is that of Acetylornithine aminotransferase, mitochondrial (ARG8) from Eremothecium gossypii (strain ATCC 10895 / CBS 109.51 / FGSC 9923 / NRRL Y-1056) (Yeast).